A 509-amino-acid chain; its full sequence is Membrane-bound lytic murein transglycosylase F (509 aa).

The N-terminal stretch at 1-40 (MLASACTHSWRTGRFLNRIIKSSVQTLTAAALIANLSACS) is a signal peptide. The tract at residues 41–280 (RPTTLEKIEQ…YLQERYFGHV (240 aa)) is non-LT domain. Residues 281 to 509 (NQLNYVGART…APFRVTPPML (229 aa)) are LT domain. Residue glutamate 327 is part of the active site. A disordered region spans residues 474–500 (DGSVAQNEDAPTTGADGTTEETPAIPA).

This sequence in the N-terminal section; belongs to the bacterial solute-binding protein 3 family. In the C-terminal section; belongs to the transglycosylase Slt family.

Its subcellular location is the cell outer membrane. The enzyme catalyses Exolytic cleavage of the (1-&gt;4)-beta-glycosidic linkage between N-acetylmuramic acid (MurNAc) and N-acetylglucosamine (GlcNAc) residues in peptidoglycan, from either the reducing or the non-reducing ends of the peptidoglycan chains, with concomitant formation of a 1,6-anhydrobond in the MurNAc residue.. Murein-degrading enzyme that degrades murein glycan strands and insoluble, high-molecular weight murein sacculi, with the concomitant formation of a 1,6-anhydromuramoyl product. Lytic transglycosylases (LTs) play an integral role in the metabolism of the peptidoglycan (PG) sacculus. Their lytic action creates space within the PG sacculus to allow for its expansion as well as for the insertion of various structures such as secretion systems and flagella. The sequence is that of Membrane-bound lytic murein transglycosylase F from Hahella chejuensis (strain KCTC 2396).